The primary structure comprises 494 residues: MLELPIISITIFLPLISVLYILLFISQSKKPDKQIHTMYVAVLSSVLTFISTIYILIEFDSSNPTYQFVERYSWLDKIGLEFHVGIDGISIFFVSLTSFLTLICIIGSLFTVKKYIKEYLVCFLLMESFCIGAFTSINLLVFYLFFEVILVPMYIIIGVWGGENRIYAAVKFFLYTFFGSVFFLLSIIYIYSKIHSFDLSNIGEFTNNFPLHVQQILWWAIFIAFAIKIPMIPFHTWLPDAHVQAPTSGSVILAGILLKLGGYGFLRVLLPLLPNASQEFAIYVIWLSVIAIIYASLVALAQKDMKKMIAYSSITHMGYVTIGIFSFTDSGVSGALFQMLSHGIISSCLFLIVGTLYERLHTKEIAKYGGVASKMPVLATFFMIAMLGSVGLPGTSGFIGEFLSLLGIYKVNVIATFLAALGIILGAIYMLKLYKEVMLGEITNKEIINFRDLYIYEIISIAPLILLIIYFGLMPSSILNVFHLSVENLLVKFF.

14 consecutive transmembrane segments (helical) span residues 5-25 (PIIS…LLFI), 37-57 (TMYV…YILI), 89-109 (ISIF…IGSL), 115-135 (YIKE…GAFT), 139-159 (LLVF…IIGV), 172-192 (FFLY…YIYS), 216-236 (ILWW…PFHT), 251-271 (VILA…VLLP), 280-300 (FAIY…LVAL), 308-328 (MIAY…FSFT), 334-354 (GALF…LIVG), 375-395 (MPVL…LPGT), 411-431 (VNVI…IYML), and 458-478 (IISI…PSSI).

It belongs to the complex I subunit 4 family.

The protein localises to the cell membrane. The catalysed reaction is a quinone + NADH + 5 H(+)(in) = a quinol + NAD(+) + 4 H(+)(out). Its function is as follows. NDH-1 shuttles electrons from NADH, via FMN and iron-sulfur (Fe-S) centers, to quinones in the respiratory chain. Couples the redox reaction to proton translocation (for every two electrons transferred, four hydrogen ions are translocated across the cytoplasmic membrane), and thus conserves the redox energy in a proton gradient. The sequence is that of NADH-quinone oxidoreductase subunit M (nuoM) from Rickettsia bellii (strain RML369-C).